Here is a 257-residue protein sequence, read N- to C-terminus: Tryptophan synthase alpha chain (257 aa).

Catalysis depends on proton acceptor residues E44 and D55.

This sequence belongs to the TrpA family. In terms of assembly, tetramer of two alpha and two beta chains.

The enzyme catalyses (1S,2R)-1-C-(indol-3-yl)glycerol 3-phosphate + L-serine = D-glyceraldehyde 3-phosphate + L-tryptophan + H2O. Its pathway is amino-acid biosynthesis; L-tryptophan biosynthesis; L-tryptophan from chorismate: step 5/5. The alpha subunit is responsible for the aldol cleavage of indoleglycerol phosphate to indole and glyceraldehyde 3-phosphate. This Chlamydia felis (strain Fe/C-56) (Chlamydophila felis) protein is Tryptophan synthase alpha chain.